The sequence spans 283 residues: NAD kinase (283 aa).

Asp66 functions as the Proton acceptor in the catalytic mechanism. Residues 66–67, 140–141, Arg151, Lys168, Asp170, 181–186, and Gln240 each bind NAD(+); these read DG, ND, and TGYCLS.

The protein belongs to the NAD kinase family. A divalent metal cation is required as a cofactor.

It is found in the cytoplasm. The enzyme catalyses NAD(+) + ATP = ADP + NADP(+) + H(+). Involved in the regulation of the intracellular balance of NAD and NADP, and is a key enzyme in the biosynthesis of NADP. Catalyzes specifically the phosphorylation on 2'-hydroxyl of the adenosine moiety of NAD to yield NADP. The protein is NAD kinase of Geobacter metallireducens (strain ATCC 53774 / DSM 7210 / GS-15).